The primary structure comprises 61 residues: GYKITIDTDKCTGDGECVDVCPVEVYELQDGKAVAVNEDECLGCESCVEVCEQDALTVEEN.

2 4Fe-4S ferredoxin-type domains span residues 2 to 31 and 32 to 61; these read YKIT…LQDG and KAVA…VEEN. 2 residues coordinate [3Fe-4S] cluster: cysteine 11 and cysteine 17. Cysteine 21, cysteine 41, cysteine 44, and cysteine 47 together coordinate [4Fe-4S] cluster. Residue cysteine 51 participates in [3Fe-4S] cluster binding.

It depends on [3Fe-4S] cluster as a cofactor. [4Fe-4S] cluster is required as a cofactor.

Ferredoxins are iron-sulfur proteins that transfer electrons in a wide variety of metabolic reactions. In Desulfocurvibacter africanus (Desulfovibrio africanus), this protein is Ferredoxin-3.